The sequence spans 732 residues: Elongation factor 2 (732 aa).

A tr-type G domain is found at 19 to 260 (ERIRNMGIAA…MVVKHLPNPL (242 aa)). GTP contacts are provided by residues 28–35 (AHIDHGKT), 94–98 (DTPGH), and 148–151 (NKVD). Diphthamide is present on His-597.

This sequence belongs to the TRAFAC class translation factor GTPase superfamily. Classic translation factor GTPase family. EF-G/EF-2 subfamily.

It is found in the cytoplasm. Functionally, catalyzes the GTP-dependent ribosomal translocation step during translation elongation. During this step, the ribosome changes from the pre-translocational (PRE) to the post-translocational (POST) state as the newly formed A-site-bound peptidyl-tRNA and P-site-bound deacylated tRNA move to the P and E sites, respectively. Catalyzes the coordinated movement of the two tRNA molecules, the mRNA and conformational changes in the ribosome. In Thermococcus kodakarensis (strain ATCC BAA-918 / JCM 12380 / KOD1) (Pyrococcus kodakaraensis (strain KOD1)), this protein is Elongation factor 2.